The chain runs to 144 residues: Deoxyuridine 5'-triphosphate nucleotidohydrolase (144 aa).

Residues 63–65 (RSG), Asn76, and 80–82 (TID) each bind substrate.

It belongs to the dUTPase family. Requires Mg(2+) as cofactor.

The enzyme catalyses dUTP + H2O = dUMP + diphosphate + H(+). It functions in the pathway pyrimidine metabolism; dUMP biosynthesis; dUMP from dCTP (dUTP route): step 2/2. In terms of biological role, this enzyme is involved in nucleotide metabolism: it produces dUMP, the immediate precursor of thymidine nucleotides and it decreases the intracellular concentration of dUTP so that uracil cannot be incorporated into DNA. The polypeptide is Deoxyuridine 5'-triphosphate nucleotidohydrolase (Bacteroides fragilis (strain YCH46)).